A 427-amino-acid polypeptide reads, in one-letter code: Enolase (427 aa).

Gln163 contributes to the (2R)-2-phosphoglycerate binding site. The active-site Proton donor is the Glu205. Residues Asp242, Glu285, and Asp312 each contribute to the Mg(2+) site. (2R)-2-phosphoglycerate is bound by residues Lys337, Arg366, Ser367, and Lys388. Catalysis depends on Lys337, which acts as the Proton acceptor.

It belongs to the enolase family. The cofactor is Mg(2+).

The protein localises to the cytoplasm. Its subcellular location is the secreted. The protein resides in the cell surface. The catalysed reaction is (2R)-2-phosphoglycerate = phosphoenolpyruvate + H2O. It participates in carbohydrate degradation; glycolysis; pyruvate from D-glyceraldehyde 3-phosphate: step 4/5. Functionally, catalyzes the reversible conversion of 2-phosphoglycerate (2-PG) into phosphoenolpyruvate (PEP). It is essential for the degradation of carbohydrates via glycolysis. The chain is Enolase from Ralstonia nicotianae (strain ATCC BAA-1114 / GMI1000) (Ralstonia solanacearum).